The sequence spans 536 residues: Phosphoenolpyruvate carboxykinase (ATP) (536 aa).

Substrate-binding residues include Arg-61, Tyr-195, and Lys-201. Residues Lys-201, His-220, and 236-244 (GLSGTGKTT) each bind ATP. 2 residues coordinate Mn(2+): Lys-201 and His-220. Position 257 (Asp-257) interacts with Mn(2+). ATP is bound by residues Glu-285, Arg-322, and Thr-447. Substrate is bound at residue Arg-322.

Belongs to the phosphoenolpyruvate carboxykinase (ATP) family. The cofactor is Mn(2+).

The protein resides in the cytoplasm. The enzyme catalyses oxaloacetate + ATP = phosphoenolpyruvate + ADP + CO2. It functions in the pathway carbohydrate biosynthesis; gluconeogenesis. Its function is as follows. Involved in the gluconeogenesis. Catalyzes the conversion of oxaloacetate (OAA) to phosphoenolpyruvate (PEP) through direct phosphoryl transfer between the nucleoside triphosphate and OAA. This is Phosphoenolpyruvate carboxykinase (ATP) from Chelativorans sp. (strain BNC1).